We begin with the raw amino-acid sequence, 475 residues long: ATP synthase subunit beta, chloroplastic (475 aa).

155-162 (GGAGVGKT) contacts ATP.

Belongs to the ATPase alpha/beta chains family. F-type ATPases have 2 components, CF(1) - the catalytic core - and CF(0) - the membrane proton channel. CF(1) has five subunits: alpha(3), beta(3), gamma(1), delta(1), epsilon(1). CF(0) has four main subunits: a(1), b(1), b'(1) and c(9-12).

Its subcellular location is the plastid. The protein resides in the chloroplast thylakoid membrane. The catalysed reaction is ATP + H2O + 4 H(+)(in) = ADP + phosphate + 5 H(+)(out). Its function is as follows. Produces ATP from ADP in the presence of a proton gradient across the membrane. The catalytic sites are hosted primarily by the beta subunits. The sequence is that of ATP synthase subunit beta, chloroplastic from Guillardia theta (Cryptophyte).